The primary structure comprises 209 residues: Uracil phosphoribosyltransferase (209 aa).

5-phospho-alpha-D-ribose 1-diphosphate-binding positions include R79, R104, and 131–139 (DPMLATGGS). Residues I194 and 199–201 (GDA) contribute to the uracil site. D200 is a 5-phospho-alpha-D-ribose 1-diphosphate binding site.

This sequence belongs to the UPRTase family. It depends on Mg(2+) as a cofactor.

It carries out the reaction UMP + diphosphate = 5-phospho-alpha-D-ribose 1-diphosphate + uracil. It participates in pyrimidine metabolism; UMP biosynthesis via salvage pathway; UMP from uracil: step 1/1. Allosterically activated by GTP. Its function is as follows. Catalyzes the conversion of uracil and 5-phospho-alpha-D-ribose 1-diphosphate (PRPP) to UMP and diphosphate. This Streptococcus pyogenes serotype M1 protein is Uracil phosphoribosyltransferase.